Reading from the N-terminus, the 516-residue chain is Apolipoprotein N-acyltransferase (516 aa).

The next 6 membrane-spanning stretches (helical) occupy residues 24-44 (LAQA…LLYL), 58-78 (GWCY…ISIH), 90-110 (LLTL…AWLW), 125-145 (LAFA…LTGF), 163-183 (APLG…ALLV), and 192-212 (PPAL…GLAL). A CN hydrolase domain is found at 230 to 471 (VQGNVEQNLK…RAVLYGEVTP (242 aa)). Glu270 acts as the Proton acceptor in catalysis. The active site involves Lys331. Cys383 serves as the catalytic Nucleophile. A helical transmembrane segment spans residues 479-499 (LRWRAWPLAGLAVLLLGWALL).

This sequence belongs to the CN hydrolase family. Apolipoprotein N-acyltransferase subfamily.

The protein localises to the cell inner membrane. The enzyme catalyses N-terminal S-1,2-diacyl-sn-glyceryl-L-cysteinyl-[lipoprotein] + a glycerophospholipid = N-acyl-S-1,2-diacyl-sn-glyceryl-L-cysteinyl-[lipoprotein] + a 2-acyl-sn-glycero-3-phospholipid + H(+). The protein operates within protein modification; lipoprotein biosynthesis (N-acyl transfer). In terms of biological role, catalyzes the phospholipid dependent N-acylation of the N-terminal cysteine of apolipoprotein, the last step in lipoprotein maturation. This is Apolipoprotein N-acyltransferase from Azotobacter vinelandii (strain DJ / ATCC BAA-1303).